We begin with the raw amino-acid sequence, 418 residues long: BTB and MATH domain-containing protein 41 (418 aa).

The tract at residues 1 to 33 is disordered; it reads MEINNGAQPENAAVSIPSRSPSGKSEKRKSPSI. An MATH domain is found at 45-173; sequence SFTNYWSVER…NDILTIGCEL (129 aa). In terms of domain architecture, BTB spans 232 to 293; sequence SDFIIVASCG…TLDVLLRHMY (62 aa).

In terms of assembly, interacts with cul-3.

Its pathway is protein modification; protein ubiquitination. Probable substrate-specific adapter of an E3 ubiquitin-protein ligase complex which mediates the ubiquitination and subsequent proteasomal degradation of target proteins. In Caenorhabditis elegans, this protein is BTB and MATH domain-containing protein 41 (bath-41).